The following is a 575-amino-acid chain: Membrane protein insertase YidC (575 aa).

Transmembrane regions (helical) follow at residues V6 to D26, F357 to F377, W381 to A401, G448 to V468, P490 to P510, and P526 to V546.

This sequence belongs to the OXA1/ALB3/YidC family. Type 1 subfamily. In terms of assembly, interacts with the Sec translocase complex via SecD. Specifically interacts with transmembrane segments of nascent integral membrane proteins during membrane integration.

The protein localises to the cell inner membrane. Required for the insertion and/or proper folding and/or complex formation of integral membrane proteins into the membrane. Involved in integration of membrane proteins that insert both dependently and independently of the Sec translocase complex, as well as at least some lipoproteins. Aids folding of multispanning membrane proteins. In Xanthomonas campestris pv. campestris (strain B100), this protein is Membrane protein insertase YidC.